The following is a 217-amino-acid chain: 7-cyano-7-deazaguanine synthase (217 aa).

10-20 provides a ligand contact to ATP; sequence FSGGQDSTTCL. Zn(2+) contacts are provided by cysteine 185, cysteine 194, cysteine 197, and cysteine 200.

Belongs to the QueC family. Homodimer. The cofactor is Zn(2+).

It carries out the reaction 7-carboxy-7-deazaguanine + NH4(+) + ATP = 7-cyano-7-deazaguanine + ADP + phosphate + H2O + H(+). Its pathway is purine metabolism; 7-cyano-7-deazaguanine biosynthesis. Functionally, catalyzes the ATP-dependent conversion of 7-carboxy-7-deazaguanine (CDG) to 7-cyano-7-deazaguanine (preQ(0)). The chain is 7-cyano-7-deazaguanine synthase from Streptococcus mutans serotype c (strain ATCC 700610 / UA159).